Here is a 348-residue protein sequence, read N- to C-terminus: GTPase Obg (348 aa).

In terms of domain architecture, Obg spans 1-159 (MKFLDQAKIY…KTIILRLKLI (159 aa)). In terms of domain architecture, OBG-type G spans 160–327 (ADAGLVGLPN…VLRLAADEIW (168 aa)). GTP is bound by residues 166–173 (GLPNAGKS), 191–195 (FTTLT), 212–215 (DIPG), 279–282 (NKMD), and 308–310 (SGV). Mg(2+) is bound by residues Ser-173 and Thr-193.

This sequence belongs to the TRAFAC class OBG-HflX-like GTPase superfamily. OBG GTPase family. As to quaternary structure, monomer. It depends on Mg(2+) as a cofactor.

The protein localises to the cytoplasm. Functionally, an essential GTPase which binds GTP, GDP and possibly (p)ppGpp with moderate affinity, with high nucleotide exchange rates and a fairly low GTP hydrolysis rate. Plays a role in control of the cell cycle, stress response, ribosome biogenesis and in those bacteria that undergo differentiation, in morphogenesis control. The sequence is that of GTPase Obg from Parvibaculum lavamentivorans (strain DS-1 / DSM 13023 / NCIMB 13966).